The sequence spans 301 residues: Glycine--tRNA ligase alpha subunit (301 aa).

Belongs to the class-II aminoacyl-tRNA synthetase family. Tetramer of two alpha and two beta subunits.

Its subcellular location is the cytoplasm. It carries out the reaction tRNA(Gly) + glycine + ATP = glycyl-tRNA(Gly) + AMP + diphosphate. This is Glycine--tRNA ligase alpha subunit from Proteus mirabilis (strain HI4320).